Consider the following 372-residue polypeptide: Alanine dehydrogenase (372 aa).

Substrate contacts are provided by Arg-15 and Lys-75. The active-site Proton donor/acceptor is His-96. Residues Ser-134, 178 to 179, Asp-198, Ser-220, 239 to 240, 266 to 269, Arg-279, and 298 to 301 contribute to the NAD(+) site; these read TA, VL, IAID, and VANM. Residue Asp-269 is the Proton donor/acceptor of the active site.

The protein belongs to the AlaDH/PNT family. Homohexamer.

The protein resides in the cytoplasm. The enzyme catalyses L-alanine + NAD(+) + H2O = pyruvate + NH4(+) + NADH + H(+). The protein operates within amino-acid degradation; L-alanine degradation via dehydrogenase pathway; NH(3) and pyruvate from L-alanine: step 1/1. Functionally, catalyzes the reversible reductive amination of pyruvate to L-alanine. A key factor in the assimilation of L-alanine as an energy source via the tricarboxylic acid cycle during sporulation. The polypeptide is Alanine dehydrogenase (ald) (Geobacillus stearothermophilus (Bacillus stearothermophilus)).